The following is an 887-amino-acid chain: Oxysterol-binding protein-related protein 3 (887 aa).

The segment at 1-35 (MMSDEKNLGVSQKLVSPSRSTSSCSSKQGSRQDSW) is disordered. 2 positions are modified to phosphoserine: Ser-16 and Ser-34. Residues 16–32 (SPSRSTSSCSSKQGSRQ) show a composition bias toward low complexity. Positions 51-146 (PPVQKGFLLK…WVSKLRHHRM (96 aa)) constitute a PH domain. The FFAT 1 signature appears at 161–167 (HFFSGST). Residues Ser-200, Ser-251, and Ser-265 each carry the phosphoserine modification. The segment at 261 to 326 (GSFESPKKEK…KNYSDGSETS (66 aa)) is disordered. Over residues 268 to 280 (KEKRSHRRWRSRA) the composition is skewed to basic residues. Phosphoserine occurs at positions 304, 309, 320, 323, 371, 372, 410, 425, 437, and 440. Positions 450–454 (EFFDA) match the FFAT 2 motif.

The protein belongs to the OSBP family. Homodimer. Interacts with RRAS. Interacts (phosphorylated form) with VAPA. Interacts with OSBPL6. Post-translationally, phosphorylation is enhanced in vitro by phorbol-12-myristate-13-acetate (PMA), forskolin and calcium ionophore A23187. Phosphorylation seems to be stimulated in conditions of low cell-cell (or cell-matrix) adhesion. Expressed in a subset of small lymphocytes (at protein level). Expressed at high concentration in kidney, lymph node and thymus. Expressed at moderate concentration in stomach, jejunum, ileum, appendix, spleen, leukocytes, trachea, lung and thyroid gland. Expressed at low concentration in whole brain, esophagus, duodenum, ileocecum, colon, skeletal muscle, bone marrow, placenta and mammary gland. Isoform 1a, isoform 1b, isoform 1c and isoform 1d are highly expressed in brain, bone marrow, colon, kidney, lung, skeletal muscle, spleen, thymus and thyroid. Not expressed in heart and liver. Isoform 2a, isoform 2b, isoform 2c and isoform 2d are expressed in brain, bone marrow, kidney, skeletal muscle, spleen, thymus and thyroid. Not expressed in heart, liver and lung.

It localises to the endoplasmic reticulum membrane. The protein resides in the cytoplasm. The protein localises to the cytosol. It is found in the cell membrane. Its subcellular location is the cell projection. It localises to the filopodium tip. The protein resides in the nucleus membrane. Its function is as follows. Phosphoinositide-binding protein which associates with both cell and endoplasmic reticulum (ER) membranes. Can bind to the ER membrane protein VAPA and recruit VAPA to plasma membrane sites, thus linking these intracellular compartments. The ORP3-VAPA complex stimulates RRAS signaling which in turn attenuates integrin beta-1 (ITGB1) activation at the cell surface. With VAPA, may regulate ER morphology. Has a role in regulation of the actin cytoskeleton, cell polarity and cell adhesion. Binds to phosphoinositides with preference for PI(3,4)P2 and PI(3,4,5)P3. Also binds 25-hydroxycholesterol and cholesterol. The sequence is that of Oxysterol-binding protein-related protein 3 (OSBPL3) from Homo sapiens (Human).